A 343-amino-acid polypeptide reads, in one-letter code: Calcium/calmodulin-dependent protein kinase type 1B (343 aa).

The Protein kinase domain occupies 15–270; that stretch reads YEIREKLGSG…CQQALQHLWI (256 aa). ATP-binding positions include 21-29 and Lys44; that span reads LGSGAFSEV. Asp136 functions as the Proton acceptor in the catalytic mechanism. A calmodulin-binding region spans residues 290-311; it reads KNFARTHWKRAFNATSFLRHIR. Residues 314–343 form a disordered region; the sequence is GQSPEGEEASRQCMTRHSHPGLGTSQSPKW. Residue Ser338 is modified to Phosphoserine.

Belongs to the protein kinase superfamily. CAMK Ser/Thr protein kinase family. CaMK subfamily. In terms of tissue distribution, expressed at highest levels in adult brain, and expressed in embryo. In the adult brain detected at high levels in the anterior olfactory nuclei, piriform cortex, septal nuclei, bed nuclei of the stria terminalis, hippocampal pyramidal cells, dentate granule cells, amygdala, hypothalamic nuclei, parabrachial nucleus, and nucleus of the solitary tract. Expressed at lower levels in adult ovary and heart and at very low levels in testis, lung and muscle.

It is found in the cytoplasm. The protein resides in the nucleus. It carries out the reaction L-seryl-[protein] + ATP = O-phospho-L-seryl-[protein] + ADP + H(+). The catalysed reaction is L-threonyl-[protein] + ATP = O-phospho-L-threonyl-[protein] + ADP + H(+). With respect to regulation, activated by Ca(2+)/calmodulin. Calcium/calmodulin-dependent protein kinase belonging to a proposed calcium-triggered signaling cascade. In vitro phosphorylates CREB1 and SYN1/synapsin I. Phosphorylates and activates CAMK1. The protein is Calcium/calmodulin-dependent protein kinase type 1B (Pnck) of Mus musculus (Mouse).